We begin with the raw amino-acid sequence, 244 residues long: Meiotic drive suppressor wtf2 (244 aa).

Positions 1-10 (MKNNYTSLKS) are enriched in polar residues. The tract at residues 1-68 (MKNNYTSLKS…RENNPSRSTD (68 aa)) is disordered. The segment covering 17-30 (ELKTDHEIDLEKGP) has biased composition (basic and acidic residues). Transmembrane regions (helical) follow at residues 73-93 (FLIK…LAIC), 110-130 (WTLF…LTYF), 149-169 (WENM…VGSP), and 183-203 (LKWS…VFIA).

Belongs to the WTF family. As to quaternary structure, homomer. Interacts with other proteins that exhibit high sequence similarity.

The protein resides in the spore membrane. Its subcellular location is the vacuole membrane. Functionally, acts as a suppressor component of the dual wtf meiotic drive system, and can suppress but not confer meiotic drive by compatible poisons. Wtf meiotic drive systems promote unequal transmission of alleles from the parental zygote to progeny spores by encoding a poison and an antidote from the same locus; the poison is trans-acting and forms toxic aggregates in all spores within an ascus, wherease the antidote is spore-specific and targets aggregates for degradation by the vacuole. Meiotic drive by wtf systems therefore lead to poisoning of all progeny that do not inherit the dual poison/antidote allele, or express a compatible antidote. This is Meiotic drive suppressor wtf2 from Schizosaccharomyces kambucha (Fission yeast).